We begin with the raw amino-acid sequence, 29 residues long: Conotoxin pr6a (29 aa).

Cystine bridges form between C2-C20, C9-C24, and C19-C28.

As to expression, expressed by the venom duct.

It is found in the secreted. Intraperitoneal injection into fish (1 nmol) provokes hyperactivity and erratic swimming in various directions after 14 minutes. The chain is Conotoxin pr6a from Conus parius (Cone snail).